Here is a 1043-residue protein sequence, read N- to C-terminus: BAG family molecular chaperone regulator 6 (1043 aa).

Disordered stretches follow at residues 253-294 (KEEL…GKTV), 311-331 (DVKE…PYPI), 343-366 (VEAS…SDLH), 410-500 (NIPV…AESR), and 533-566 (SVES…KKSF). Composition is skewed to basic and acidic residues over residues 311–324 (DVKE…KEEP), 343–357 (VEAS…EGRN), 416–443 (SENH…KKEQ), and 478–487 (KRMEKSKETK). Polar residues predominate over residues 534-543 (VESNSNLQEE). A compositionally biased stretch (basic and acidic residues) spans 550–566 (KPCEAKENREQPAKKSF). One can recognise an IQ domain in the interval 568–597 (EEEAARIIQSMYRGYDVRRWEPIKKLKEIA). One can recognise a BAG domain in the interval 595 to 672 (EIATVREQMG…SIQDKLDSLK (78 aa)). Basic and acidic residues predominate over residues 724-741 (SPEEHPMSVLNRTDEKQA). Disordered regions lie at residues 724-749 (SPEE…ETEE), 764-799 (ATEN…GNGM), 817-975 (EPIN…ISKE), and 1015-1043 (EKKL…DAVL). Over residues 840–852 (ASEVSEAETNSSE) the composition is skewed to low complexity. Residues 853 to 871 (NENRKGEDDIVLHSEKNVE) show a composition bias toward basic and acidic residues. Polar residues-rich tracts occupy residues 885-899 (QPLS…TREG) and 919-932 (SPNN…QTSE). The segment covering 934–951 (QDEKEQSPETEVIVKEQP) has biased composition (basic and acidic residues). Residues 971–1024 (GISKETKKLMEENQRFKETMETLVKAGREQLEVISKLTSRVKSLEKKLSHKKKT) adopt a coiled-coil conformation. The segment covering 1018–1031 (LSHKKKTQIRRRAS) has biased composition (basic residues). The span at 1034–1043 (MSVSPTDAVL) shows a compositional bias: polar residues.

As to quaternary structure, binds to the ATPase domain of HSP70/HSC70 chaperones. Interacts with calmodulins CAM1, CAM2, CAM3, CAM4, CAM6 and CAM7. Interacts with BAGP1 and APCB1. Detected in stems, leaves, flowers and roots.

In terms of biological role, co-chaperone that regulates diverse cellular pathways, such as programmed cell death and stress responses. Involved in plant basal resistance. Involved in basal heat response through the regulation of the heat induced small HSP (sHSP) transcriptional cascade. Induces autophagy. The sequence is that of BAG family molecular chaperone regulator 6 from Arabidopsis thaliana (Mouse-ear cress).